The sequence spans 127 residues: Glycine cleavage system H protein (127 aa).

The region spanning 22–104 (KVRIGITHFA…YEKAWMIVVE (83 aa)) is the Lipoyl-binding domain. Position 63 is an N6-lipoyllysine (K63).

The protein belongs to the GcvH family. In terms of assembly, the glycine cleavage system is composed of four proteins: P, T, L and H. The cofactor is (R)-lipoate.

Its function is as follows. The glycine cleavage system catalyzes the degradation of glycine. The H protein shuttles the methylamine group of glycine from the P protein to the T protein. Functionally, is also involved in protein lipoylation via its role as an octanoyl/lipoyl carrier protein intermediate. The sequence is that of Glycine cleavage system H protein from Bacillus pumilus (strain SAFR-032).